Here is a 318-residue protein sequence, read N- to C-terminus: Phospho-N-acetylmuramoyl-pentapeptide-transferase (318 aa).

10 consecutive transmembrane segments (helical) span residues 5–25 (LKPL…VLAF), 50–70 (PTMG…VLAP), 71–91 (PSPL…IGLV), 115–135 (VLLG…GSVI), 139–159 (VTGW…LLLV), 173–193 (GLAA…ALTL), 198–218 (LVTF…YNFH), 222–242 (VFMG…LAIM), 248–268 (VLPV…LQVV), and 298–318 (VLFF…LLTI).

Belongs to the glycosyltransferase 4 family. MraY subfamily. It depends on Mg(2+) as a cofactor.

It localises to the cell membrane. It catalyses the reaction UDP-N-acetyl-alpha-D-muramoyl-L-alanyl-gamma-D-glutamyl-meso-2,6-diaminopimeloyl-D-alanyl-D-alanine + di-trans,octa-cis-undecaprenyl phosphate = di-trans,octa-cis-undecaprenyl diphospho-N-acetyl-alpha-D-muramoyl-L-alanyl-D-glutamyl-meso-2,6-diaminopimeloyl-D-alanyl-D-alanine + UMP. Its pathway is cell wall biogenesis; peptidoglycan biosynthesis. Its function is as follows. Catalyzes the initial step of the lipid cycle reactions in the biosynthesis of the cell wall peptidoglycan: transfers peptidoglycan precursor phospho-MurNAc-pentapeptide from UDP-MurNAc-pentapeptide onto the lipid carrier undecaprenyl phosphate, yielding undecaprenyl-pyrophosphoryl-MurNAc-pentapeptide, known as lipid I. The protein is Phospho-N-acetylmuramoyl-pentapeptide-transferase of Moorella thermoacetica (strain ATCC 39073 / JCM 9320).